A 316-amino-acid polypeptide reads, in one-letter code: MKWTEVNVKTTNEAVEAVSSIFDGLDAVGVKIENALDFENYRASNPAELMELKDIPHITEGAIVSAYYPDDTTNIDVILSQLRTKVNALVDFGLDIGEASITTVEVQDDNWATAWKKYYHPVRITRYLTVKPSWSDYQASFSDEKVISLDPGMAFGTGTHPTTRLCLQALEMTMRGGETLYDVGTGSGVLSIAAKHLGASDVEAFDVDDIAVAAAQENFDLNPIAKDIKVSANDLLKGINRPVDTIVANILSDILVPLIPQAKQLLNSNGYFILSGIIDDKLELVIDTLIANDFKIEEVLHYGEWRGVIATNRKDD.

Residues Thr-163, Gly-184, Asp-206, and Asn-249 each contribute to the S-adenosyl-L-methionine site.

It belongs to the methyltransferase superfamily. PrmA family.

It is found in the cytoplasm. The catalysed reaction is L-lysyl-[protein] + 3 S-adenosyl-L-methionine = N(6),N(6),N(6)-trimethyl-L-lysyl-[protein] + 3 S-adenosyl-L-homocysteine + 3 H(+). Methylates ribosomal protein L11. This is Ribosomal protein L11 methyltransferase from Pediococcus pentosaceus (strain ATCC 25745 / CCUG 21536 / LMG 10740 / 183-1w).